A 93-amino-acid chain; its full sequence is Large ribosomal subunit protein uL23c (93 aa).

This sequence belongs to the universal ribosomal protein uL23 family. In terms of assembly, part of the 50S ribosomal subunit.

It is found in the plastid. It localises to the chloroplast. Its function is as follows. Binds to 23S rRNA. The chain is Large ribosomal subunit protein uL23c (rpl23) from Adiantum capillus-veneris (Maidenhair fern).